Reading from the N-terminus, the 723-residue chain is Threonine--tRNA ligase 1, cytoplasmic (723 aa).

Polar residues predominate over residues 1 to 10 (MSEEQASSPS). Residues 1 to 49 (MSEEQASSPSAKMGDEEKPVGAGEEKQKEGSKKKNKEGSGDGGRAELNP) are disordered. Positions 13–39 (MGDEEKPVGAGEEKQKEGSKKKNKEGS) are enriched in basic and acidic residues. S39 carries the phosphoserine modification. In terms of domain architecture, TGS spans 79-143 (DSKPIKVTLP…EEDCTLELLK (65 aa)). The residue at position 243 (K243) is an N6-acetyllysine. At T246 the chain carries Phosphothreonine. Y298 carries the phosphotyrosine modification. At T453 the chain carries Phosphothreonine. The residue at position 702 (S702) is a Phosphoserine.

This sequence belongs to the class-II aminoacyl-tRNA synthetase family. In terms of assembly, homodimer. In terms of processing, ISGylated.

The protein resides in the cytoplasm. The enzyme catalyses tRNA(Thr) + L-threonine + ATP = L-threonyl-tRNA(Thr) + AMP + diphosphate + H(+). Its function is as follows. Catalyzes the attachment of threonine to tRNA(Thr) in a two-step reaction: threonine is first activated by ATP to form Thr-AMP and then transferred to the acceptor end of tRNA(Thr). Also edits incorrectly charged tRNA(Thr) via its editing domain, at the post-transfer stage. This Bos taurus (Bovine) protein is Threonine--tRNA ligase 1, cytoplasmic (TARS1).